Reading from the N-terminus, the 350-residue chain is MSNSWWLKPAQAIDVPMREAALARQQQLTKPAGSLAQLERLAVQLAGLQGRERPAVDQLWIAIFAADHGVVAEGVSAYPQEVTGQMLHNFVNGGAAISVLARQLSAQLDVVDLGTVSPMDLPGVRHLRIGAGTANFAHGPAMSVEQGLAALQAGRDSVLRAKAVGTELFIGGEMGIGNTTAASAVACSLLECAAPLLVGPGTGLNAEGIQHKTRVIERALALHAEQAGDPLNSLFCLGGFEIAALAGAYLACAQEGIAVLVDGFICSVAALVAVRLNPSCRNWLLFGHRGAEPGHRHLLETLQAEPLLDLGLRLGEGSGAALAVPLVRLACELHNGMATFAEAAVADRPA.

Glu316 (proton acceptor) is an active-site residue.

The protein belongs to the CobT family.

The enzyme catalyses 5,6-dimethylbenzimidazole + nicotinate beta-D-ribonucleotide = alpha-ribazole 5'-phosphate + nicotinate + H(+). It functions in the pathway nucleoside biosynthesis; alpha-ribazole biosynthesis; alpha-ribazole from 5,6-dimethylbenzimidazole: step 1/2. Catalyzes the synthesis of alpha-ribazole-5'-phosphate from nicotinate mononucleotide (NAMN) and 5,6-dimethylbenzimidazole (DMB). This chain is Nicotinate-nucleotide--dimethylbenzimidazole phosphoribosyltransferase, found in Pseudomonas syringae pv. syringae (strain B728a).